Reading from the N-terminus, the 426-residue chain is Dynein regulatory complex protein 10 (426 aa).

Disordered regions lie at residues 18–37 and 399–426; these read TRIGPKTDPSKRPADPLKPL and SKKKRGKGKAKGKEKGKQKGKEKGKGKK. The region spanning 377–406 is the IQ domain; sequence MVRAATLIQAFWKGYLVRSLLRSKKKRGKG. The segment covering 399-408 has biased composition (basic residues); it reads SKKKRGKGKA. Residues 409–426 are compositionally biased toward basic and acidic residues; it reads KGKEKGKQKGKEKGKGKK.

This sequence belongs to the DRC10 family. Component of the nexin-dynein regulatory complex (N-DRC). Interacts with CFAP52.

It localises to the cytoplasm. The protein localises to the cytoskeleton. It is found in the flagellum axoneme. Functionally, component of the nexin-dynein regulatory complex (N-DRC), a key regulator of ciliary/flagellar motility which maintains the alignment and integrity of the distal axoneme and regulates microtubule sliding in motile axonemes. This Macaca fascicularis (Crab-eating macaque) protein is Dynein regulatory complex protein 10 (IQCD).